A 225-amino-acid chain; its full sequence is uncharacterized protein (225 aa).

This is an uncharacterized protein from Bacillus subtilis (strain 168).